The following is a 208-amino-acid chain: NAD(P)H dehydrogenase (quinone) (208 aa).

In terms of domain architecture, Flavodoxin-like spans 4–199; the sequence is VNVIFHSIHG…AMARYQGRHV (196 aa). FMN-binding positions include 10-15 and 87-89; these read SIHGHT and TRY. Residue W107 coordinates substrate. Residues 122–128 and H143 each bind FMN; that span reads SSGTQHG.

This sequence belongs to the WrbA family. The cofactor is FMN.

The enzyme catalyses a quinone + NADH + H(+) = a quinol + NAD(+). The catalysed reaction is a quinone + NADPH + H(+) = a quinol + NADP(+). This chain is NAD(P)H dehydrogenase (quinone), found in Methanosarcina barkeri (strain Fusaro / DSM 804).